Consider the following 929-residue polypeptide: Isoleucine--tRNA ligase (929 aa).

Positions 58–68 (PYANGDIHIGH) match the 'HIGH' region motif. E563 contacts L-isoleucyl-5'-AMP. A 'KMSKS' region motif is present at residues 605–609 (KMSKS). K608 serves as a coordination point for ATP. Zn(2+)-binding residues include C892, C895, C912, and C915.

It belongs to the class-I aminoacyl-tRNA synthetase family. IleS type 1 subfamily. Monomer. Zn(2+) serves as cofactor.

Its subcellular location is the cytoplasm. It catalyses the reaction tRNA(Ile) + L-isoleucine + ATP = L-isoleucyl-tRNA(Ile) + AMP + diphosphate. Functionally, catalyzes the attachment of isoleucine to tRNA(Ile). As IleRS can inadvertently accommodate and process structurally similar amino acids such as valine, to avoid such errors it has two additional distinct tRNA(Ile)-dependent editing activities. One activity is designated as 'pretransfer' editing and involves the hydrolysis of activated Val-AMP. The other activity is designated 'posttransfer' editing and involves deacylation of mischarged Val-tRNA(Ile). The sequence is that of Isoleucine--tRNA ligase from Neisseria gonorrhoeae (strain NCCP11945).